The sequence spans 309 residues: HPr kinase/phosphorylase (309 aa).

Residues H138 and K159 contribute to the active site. 153–160 lines the ATP pocket; that stretch reads GDSGIGKS. A Mg(2+)-binding site is contributed by S160. Catalysis depends on D177, which acts as the Proton acceptor; for phosphorylation activity. Proton donor; for dephosphorylation activity. Residues 201–210 form an important for the catalytic mechanism of both phosphorylation and dephosphorylation region; it reads LEIRGVGIID. E202 is a binding site for Mg(2+). R243 is a catalytic residue. The segment at 264–269 is important for the catalytic mechanism of dephosphorylation; it reads PVKTGR.

The protein belongs to the HPrK/P family. As to quaternary structure, homohexamer. Mg(2+) serves as cofactor.

It catalyses the reaction [HPr protein]-L-serine + ATP = [HPr protein]-O-phospho-L-serine + ADP + H(+). The enzyme catalyses [HPr protein]-O-phospho-L-serine + phosphate + H(+) = [HPr protein]-L-serine + diphosphate. Its function is as follows. Catalyzes the ATP- as well as the pyrophosphate-dependent phosphorylation of a specific serine residue in HPr, a phosphocarrier protein of the phosphoenolpyruvate-dependent sugar phosphotransferase system (PTS). HprK/P also catalyzes the pyrophosphate-producing, inorganic phosphate-dependent dephosphorylation (phosphorolysis) of seryl-phosphorylated HPr (P-Ser-HPr). The two antagonistic activities of HprK/P are regulated by several intracellular metabolites, which change their concentration in response to the absence or presence of rapidly metabolisable carbon sources (glucose, fructose, etc.) in the growth medium. Therefore, by controlling the phosphorylation state of HPr, HPrK/P is a sensor enzyme that plays a major role in the regulation of carbon metabolism and sugar transport: it mediates carbon catabolite repression (CCR), and regulates PTS-catalyzed carbohydrate uptake and inducer exclusion. This chain is HPr kinase/phosphorylase, found in Streptococcus thermophilus (strain ATCC BAA-250 / LMG 18311).